We begin with the raw amino-acid sequence, 329 residues long: Thioredoxin domain-containing protein 6 (329 aa).

The Thioredoxin domain maps to 11 to 115; sequence QVNINTQELW…QKTILQQLEA (105 aa). The segment at 157-303 is NDK; that stretch reads GKTCTLGIIK…LFPSFKFSDK (147 aa). The interval 303 to 329 is disordered; it reads KDKEAPPGAEAQTMVGPVEDPCMSERI.

It belongs to the NDK family. As to quaternary structure, monomer and homodimer. As to expression, expressed in lung airway epithelium (at protein level).

Its subcellular location is the cytoplasm. It localises to the cytoskeleton. The protein localises to the cilium axoneme. The protein resides in the dynein axonemal particle. Its function is as follows. May be a regulator of microtubule physiology. This is Thioredoxin domain-containing protein 6 from Mus musculus (Mouse).